The sequence spans 508 residues: Glycogen synthase (508 aa).

An ADP-alpha-D-glucose-binding site is contributed by K15. The interval 483-508 (ARNRAETRPQTASALSYREPRPAAEY) is disordered.

This sequence belongs to the glycosyltransferase 1 family. Bacterial/plant glycogen synthase subfamily.

It carries out the reaction [(1-&gt;4)-alpha-D-glucosyl](n) + ADP-alpha-D-glucose = [(1-&gt;4)-alpha-D-glucosyl](n+1) + ADP + H(+). The protein operates within glycan biosynthesis; glycogen biosynthesis. Synthesizes alpha-1,4-glucan chains using ADP-glucose. The chain is Glycogen synthase from Paracidovorax citrulli (strain AAC00-1) (Acidovorax citrulli).